The chain runs to 406 residues: Tyrosine--tRNA ligase (406 aa).

Residue Y34 participates in L-tyrosine binding. The 'HIGH' region motif lies at 39 to 48; that stretch reads PTADSLHVGH. The L-tyrosine site is built by Y167 and Q171. A 'KMSKS' region motif is present at residues 227–231; the sequence is KMGKT. K230 serves as a coordination point for ATP. The region spanning 339-404 is the S4 RNA-binding domain; the sequence is RKIVDVLFEA…GKKEYHRLLV (66 aa).

Belongs to the class-I aminoacyl-tRNA synthetase family. TyrS type 1 subfamily. As to quaternary structure, homodimer.

It is found in the cytoplasm. It catalyses the reaction tRNA(Tyr) + L-tyrosine + ATP = L-tyrosyl-tRNA(Tyr) + AMP + diphosphate + H(+). In terms of biological role, catalyzes the attachment of tyrosine to tRNA(Tyr) in a two-step reaction: tyrosine is first activated by ATP to form Tyr-AMP and then transferred to the acceptor end of tRNA(Tyr). The sequence is that of Tyrosine--tRNA ligase from Caldanaerobacter subterraneus subsp. tengcongensis (strain DSM 15242 / JCM 11007 / NBRC 100824 / MB4) (Thermoanaerobacter tengcongensis).